The primary structure comprises 157 residues: UPF0225 protein PA1039 (157 aa).

The protein belongs to the UPF0225 family.

The sequence is that of UPF0225 protein PA1039 from Pseudomonas aeruginosa (strain ATCC 15692 / DSM 22644 / CIP 104116 / JCM 14847 / LMG 12228 / 1C / PRS 101 / PAO1).